A 297-amino-acid chain; its full sequence is Cytidine deaminase (297 aa).

CMP/dCMP-type deaminase domains follow at residues Ser-54–Lys-174 and Leu-192–Val-297. Position 95–97 (Asn-95–Glu-97) interacts with substrate. Zn(2+) is bound at residue His-108. Glu-110 acts as the Proton donor in catalysis. Zn(2+)-binding residues include Cys-135 and Cys-138.

Belongs to the cytidine and deoxycytidylate deaminase family. As to quaternary structure, homodimer. It depends on Zn(2+) as a cofactor.

It carries out the reaction cytidine + H2O + H(+) = uridine + NH4(+). The catalysed reaction is 2'-deoxycytidine + H2O + H(+) = 2'-deoxyuridine + NH4(+). This enzyme scavenges exogenous and endogenous cytidine and 2'-deoxycytidine for UMP synthesis. This is Cytidine deaminase from Actinobacillus pleuropneumoniae serotype 5b (strain L20).